We begin with the raw amino-acid sequence, 55 residues long: uncharacterized protein (55 aa).

The N-terminal stretch at 1–19 is a signal peptide; that stretch reads MQILLVVRLVLLWLGGLSA.

This is an uncharacterized protein from Orgyia pseudotsugata multicapsid polyhedrosis virus (OpMNPV).